Consider the following 285-residue polypeptide: 4-diphosphocytidyl-2-C-methyl-D-erythritol kinase (285 aa).

Lys12 is a catalytic residue. Pro94–Ser104 is an ATP binding site. The active site involves Asp136.

This sequence belongs to the GHMP kinase family. IspE subfamily.

It catalyses the reaction 4-CDP-2-C-methyl-D-erythritol + ATP = 4-CDP-2-C-methyl-D-erythritol 2-phosphate + ADP + H(+). Its pathway is isoprenoid biosynthesis; isopentenyl diphosphate biosynthesis via DXP pathway; isopentenyl diphosphate from 1-deoxy-D-xylulose 5-phosphate: step 3/6. Its function is as follows. Catalyzes the phosphorylation of the position 2 hydroxy group of 4-diphosphocytidyl-2C-methyl-D-erythritol. This is 4-diphosphocytidyl-2-C-methyl-D-erythritol kinase from Paracidovorax citrulli (strain AAC00-1) (Acidovorax citrulli).